A 343-amino-acid chain; its full sequence is MAKRQLNRRQNWRIEKIQGERAARAAKRESSAVEALEGGDLGPEQTGLVIAHFGVQVEVEALEGELAGSVSRCHLRANLPALVTGDKVVWRAGNQGIGVIVAQLPRTTELRRPDSRGQLKPVAANVDMIVIVFAPLPEPHANLIDRYLVAAEHAGIRPLLLLNKFDLIDEQNAPALNALLAVYRTLGYPVLEVSAHHGNGMEQLQQQLDGRISVFVGQSGVGKSSLVNSLLPEVDTRVGPLSELSGQGTHTTTTARLFHFPGGGELIDSPGIREFGLGHVSRSDVEAGFIEFNDLIGTCRFRDCKHDREPGCALLKALEDGRVQQQRMNSYRSIIASLPESSY.

The CP-type G domain maps to 116 to 275 (RGQLKPVAAN…LIDSPGIREF (160 aa)). GTP-binding positions include 163 to 166 (NKFD) and 217 to 225 (GQSGVGKSS). Zn(2+)-binding residues include cysteine 299, cysteine 304, histidine 306, and cysteine 312.

It belongs to the TRAFAC class YlqF/YawG GTPase family. RsgA subfamily. As to quaternary structure, monomer. Associates with 30S ribosomal subunit, binds 16S rRNA. It depends on Zn(2+) as a cofactor.

The protein localises to the cytoplasm. One of several proteins that assist in the late maturation steps of the functional core of the 30S ribosomal subunit. Helps release RbfA from mature subunits. May play a role in the assembly of ribosomal proteins into the subunit. Circularly permuted GTPase that catalyzes slow GTP hydrolysis, GTPase activity is stimulated by the 30S ribosomal subunit. The sequence is that of Small ribosomal subunit biogenesis GTPase RsgA from Pseudomonas fluorescens (strain SBW25).